A 487-amino-acid chain; its full sequence is UDP-N-acetylmuramoyl-L-alanyl-D-glutamate--2,6-diaminopimelate ligase (487 aa).

Residues leucine 23 and serine 25 each contribute to the UDP-N-acetyl-alpha-D-muramoyl-L-alanyl-D-glutamate site. Position 108-114 (108-114) interacts with ATP; it reads GTNGKTS. UDP-N-acetyl-alpha-D-muramoyl-L-alanyl-D-glutamate is bound by residues 150-151, serine 177, glutamine 183, and arginine 185; that span reads TT. N6-carboxylysine is present on lysine 217. Meso-2,6-diaminopimelate-binding positions include arginine 378, 402–405, glycine 453, and glutamate 457; that span reads DNPR. Positions 402 to 405 match the Meso-diaminopimelate recognition motif motif; it reads DNPR.

The protein belongs to the MurCDEF family. MurE subfamily. Mg(2+) serves as cofactor. Post-translationally, carboxylation is probably crucial for Mg(2+) binding and, consequently, for the gamma-phosphate positioning of ATP.

The protein resides in the cytoplasm. It catalyses the reaction UDP-N-acetyl-alpha-D-muramoyl-L-alanyl-D-glutamate + meso-2,6-diaminopimelate + ATP = UDP-N-acetyl-alpha-D-muramoyl-L-alanyl-gamma-D-glutamyl-meso-2,6-diaminopimelate + ADP + phosphate + H(+). It participates in cell wall biogenesis; peptidoglycan biosynthesis. In terms of biological role, catalyzes the addition of meso-diaminopimelic acid to the nucleotide precursor UDP-N-acetylmuramoyl-L-alanyl-D-glutamate (UMAG) in the biosynthesis of bacterial cell-wall peptidoglycan. The sequence is that of UDP-N-acetylmuramoyl-L-alanyl-D-glutamate--2,6-diaminopimelate ligase from Ectopseudomonas mendocina (strain ymp) (Pseudomonas mendocina).